A 298-amino-acid polypeptide reads, in one-letter code: Centromere protein O (298 aa).

The segment at 29–49 (NISNRKSEEPAVRKKESSLRT) is disordered. Basic and acidic residues predominate over residues 33 to 49 (RKSEEPAVRKKESSLRT). Ser-35 is subject to Phosphoserine. Residues 39–74 (AVRKKESSLRTKIRELRQQRDKLRAEVKQWGARVKE) adopt a coiled-coil conformation.

It belongs to the CENP-O/MCM21 family. Component of the CENPA-CAD complex, composed of CENPI, CENPK, CENPL, CENPO, CENPP, CENPQ, CENPR and CENPS. The CENPA-CAD complex interacts with the CENPA-NAC complex, at least composed of CENPA, CENPC, CENPH, CENPM, CENPN, CENPT and CENPU.

The protein resides in the nucleus. It localises to the chromosome. The protein localises to the centromere. It is found in the kinetochore. Its function is as follows. Component of the CENPA-CAD (nucleosome distal) complex, a complex recruited to centromeres which is involved in assembly of kinetochore proteins, mitotic progression and chromosome segregation. May be involved in incorporation of newly synthesized CENPA into centromeres via its interaction with the CENPA-NAC complex. Modulates the kinetochore-bound levels of NDC80 complex. The sequence is that of Centromere protein O (Cenpo) from Mus musculus (Mouse).